We begin with the raw amino-acid sequence, 810 residues long: DNA replication licensing factor mcm-6 (810 aa).

One can recognise an MCM domain in the interval 346 to 553 (IEKNIVDSLF…VTDYAIARRI (208 aa)). ATP is bound by residues S400, T401, A402, K403, S404, and N505. Positions 529-532 (SRFD) match the Arginine finger motif. ADP contacts are provided by R622 and E625. A disordered region spans residues 685-705 (KENQGGDDDMEHDGEKDETAK).

It belongs to the MCM family. Component of the mcm2-7 complex. The complex forms a toroidal hexameric ring with the proposed subunit order mcm2-mcm6-mcm4-mcm7-mcm3-mcm5 (By simililarity).

The protein localises to the nucleus. The catalysed reaction is ATP + H2O = ADP + phosphate + H(+). Functionally, acts as a component of the MCM2-7 complex (MCM complex) which is the replicative helicase essential for 'once per cell cycle' DNA replication initiation and elongation in eukaryotic cells. Core component of CDC45-MCM-GINS (CMG) helicase, the molecular machine that unwinds template DNA during replication, and around which the replisome is built. The active ATPase sites in the MCM2-7 ring are formed through the interaction surfaces of two neighboring subunits such that a critical structure of a conserved arginine finger motif is provided in trans relative to the ATP-binding site of the Walker A box of the adjacent subunit. The six ATPase active sites, however, are likely to contribute differentially to the complex helicase activity. This is DNA replication licensing factor mcm-6 from Caenorhabditis briggsae.